Reading from the N-terminus, the 251-residue chain is Diphthine synthase (251 aa).

S-adenosyl-L-methionine-binding positions include aspartate 83, leucine 86, 111–112 (SI), leucine 163, and leucine 205.

It belongs to the diphthine synthase family. As to quaternary structure, homodimer.

It catalyses the reaction 2-[(3S)-amino-3-carboxypropyl]-L-histidyl-[translation elongation factor 2] + 3 S-adenosyl-L-methionine = diphthine-[translation elongation factor 2] + 3 S-adenosyl-L-homocysteine + 3 H(+). Its pathway is protein modification; peptidyl-diphthamide biosynthesis. In terms of biological role, S-adenosyl-L-methionine-dependent methyltransferase that catalyzes the trimethylation of the amino group of the modified target histidine residue in translation elongation factor 2 (EF-2), to form an intermediate called diphthine. The three successive methylation reactions represent the second step of diphthamide biosynthesis. This is Diphthine synthase from Pyrobaculum calidifontis (strain DSM 21063 / JCM 11548 / VA1).